The sequence spans 322 residues: Mas-related G-protein coupled receptor member X3 (322 aa).

Residues 1–31 (MDPTIPALGTSQTPINRREETPCYKQTLSLT) are Extracellular-facing. The chain crosses the membrane as a helical span at residues 32–52 (VLTCIISLVGLTGNAVVLWLL). The Cytoplasmic segment spans residues 53–60 (GFRMRRNA). Residues 61-81 (VSTYILNLAAVDFLFLSGHIV) form a helical membrane-spanning segment. Residues 82–96 (RSPLRLISIRHPISK) lie on the Extracellular side of the membrane. Residues 97-117 (IVNPVMTFPYFIGLSMLSAIS) traverse the membrane as a helical segment. At 118 to 139 (TERCLSVLWPMWYRCRRPRHLS) the chain is on the cytoplasmic side. Residues 140–160 (VVVCVLLWALSLLRSILEWMF) form a helical membrane-spanning segment. The Extracellular portion of the chain corresponds to 161–177 (CDFLFSGADSVWCETSD). The chain crosses the membrane as a helical span at residues 178 to 198 (FITIAWLIFLCVVLCGSSLVL). At 199-213 (LVRILCGSRKMPLTR) the chain is on the cytoplasmic side. A helical membrane pass occupies residues 214-234 (LYVTILLTVLVFLLCGLPFGI). The Extracellular portion of the chain corresponds to 235-254 (QWALFSRIHLDWKVLFCHVH). The helical transmembrane segment at 255–275 (LISVFLSSLNSSANPIIYFFV) threads the bilayer. Topologically, residues 276 to 322 (GSFRQRQNRQNLKLVLQRALQDTPEVDEGGGRLPEETLELSVSRLEQ) are cytoplasmic.

Belongs to the G-protein coupled receptor 1 family. Mas subfamily.

It is found in the cell membrane. In terms of biological role, orphan receptor. Probably involved in the function of nociceptive neurons. May regulate nociceptor function and/or development, including the sensation or modulation of pain. Potently activated by enkephalins. This chain is Mas-related G-protein coupled receptor member X3 (MRGPRX3), found in Macaca mulatta (Rhesus macaque).